The chain runs to 448 residues: tRNA modification GTPase MnmE (448 aa).

(6S)-5-formyl-5,6,7,8-tetrahydrofolate-binding residues include R24, E81, and K120. A TrmE-type G domain is found at G216 to G373. N226 is a K(+) binding site. GTP is bound by residues N226 to S231, T245 to T251, and D270 to G273. A Mg(2+)-binding site is contributed by S230. Residues T245, I247, and T250 each coordinate K(+). T251 contacts Mg(2+). Residue K448 participates in (6S)-5-formyl-5,6,7,8-tetrahydrofolate binding.

The protein belongs to the TRAFAC class TrmE-Era-EngA-EngB-Septin-like GTPase superfamily. TrmE GTPase family. In terms of assembly, homodimer. Heterotetramer of two MnmE and two MnmG subunits. Requires K(+) as cofactor.

It localises to the cytoplasm. Its function is as follows. Exhibits a very high intrinsic GTPase hydrolysis rate. Involved in the addition of a carboxymethylaminomethyl (cmnm) group at the wobble position (U34) of certain tRNAs, forming tRNA-cmnm(5)s(2)U34. The sequence is that of tRNA modification GTPase MnmE from Neisseria meningitidis serogroup C (strain 053442).